Consider the following 94-residue polypeptide: MLRLDLQFFASKKGVGSTKNGRDSEAKRLGAKRADGQFVTGGSILYRQRGTKIYPGENVGRGGDDTLFAKIDGTVKFERFGRDRKKVSVYPVAQ.

A propeptide spanning residues 1-9 (MLRLDLQFF) is cleaved from the precursor.

This sequence belongs to the bacterial ribosomal protein bL27 family. In terms of assembly, part of the 50S ribosomal subunit. In terms of processing, the N-terminus is cleaved by ribosomal processing cysteine protease Prp.

Functionally, plays a role in sporulation at high temperatures. The chain is Large ribosomal subunit protein bL27 (rpmA) from Bacillus subtilis (strain 168).